The sequence spans 466 residues: Arginine biosynthesis bifunctional protein ArgJ, mitochondrial (466 aa).

Substrate contacts are provided by Thr194, Lys223, Thr234, Glu321, Asn461, and Thr466. The active-site Nucleophile is Thr234.

This sequence belongs to the ArgJ family. In terms of assembly, heterodimer of an alpha and a beta chain. Post-translationally, the alpha and beta chains are autoproteolytically processed from a single precursor protein within the mitochondrion.

The protein localises to the mitochondrion matrix. The catalysed reaction is N(2)-acetyl-L-ornithine + L-glutamate = N-acetyl-L-glutamate + L-ornithine. It carries out the reaction L-glutamate + acetyl-CoA = N-acetyl-L-glutamate + CoA + H(+). It participates in amino-acid biosynthesis; L-arginine biosynthesis; L-ornithine and N-acetyl-L-glutamate from L-glutamate and N(2)-acetyl-L-ornithine (cyclic): step 1/1. It functions in the pathway amino-acid biosynthesis; L-arginine biosynthesis; N(2)-acetyl-L-ornithine from L-glutamate: step 1/4. Its function is as follows. Catalyzes two activities which are involved in the cyclic version of arginine biosynthesis: the synthesis of acetylglutamate from glutamate and acetyl-CoA, and of ornithine by transacetylation between acetylornithine and glutamate. The chain is Arginine biosynthesis bifunctional protein ArgJ, mitochondrial from Aspergillus flavus (strain ATCC 200026 / FGSC A1120 / IAM 13836 / NRRL 3357 / JCM 12722 / SRRC 167).